We begin with the raw amino-acid sequence, 323 residues long: Mas-related G-protein coupled receptor member B4 (323 aa).

The Extracellular segment spans residues 1–34 (MSPTTQAWSINNTVVKENYYTEILSCITTFNTLN). N-linked (GlcNAc...) asparagine glycosylation occurs at asparagine 11. The chain crosses the membrane as a helical span at residues 35–55 (FLIVIISVVGMAGNATVLWLL). Residues 56 to 63 (GFHMHRNA) lie on the Cytoplasmic side of the membrane. A helical membrane pass occupies residues 64-84 (FSVYVLNLAGADFLYLCAQTV). Topologically, residues 85-98 (YSLECVLQFDNSYF) are extracellular. The chain crosses the membrane as a helical span at residues 99–119 (YFLLTILMFNYLAGFCMIAAI). Residues 120–147 (STERCLSVTWPIWYHCQRPRHTSATVCA) lie on the Cytoplasmic side of the membrane. A helical transmembrane segment spans residues 148 to 168 (LFWAFSLLLSLLLGQGCGFLF). The Extracellular segment spans residues 169-180 (SKFDYSFCRYCN). The chain crosses the membrane as a helical span at residues 181–201 (FIATAFLIVIFMVLFVSSLAL). The Cytoplasmic portion of the chain corresponds to 202 to 224 (LAKIICGSHRIPVTRFYVTIALT). The chain crosses the membrane as a helical span at residues 225–245 (VLVFIFFGLPIGICVFLLPWI). Residues 246–255 (HMMLSSFFYE) are Extracellular-facing. The chain crosses the membrane as a helical span at residues 256–276 (MVTLLSCVNSCANPIIYFFVG). Residues 277–323 (SIRHHRLQRQTLKLLLQRAMQDTPEEEGGERGPSQKSEDLEVVRCSS) lie on the Cytoplasmic side of the membrane. A disordered region spans residues 298-323 (DTPEEEGGERGPSQKSEDLEVVRCSS). The span at 312-323 (KSEDLEVVRCSS) shows a compositional bias: basic and acidic residues.

It belongs to the G-protein coupled receptor 1 family. Mas subfamily. Expressed strongly in newborn dorsal root ganglia, adult dorsal root ganglia and trigeminal ganlia.

Its subcellular location is the membrane. Functionally, orphan receptor. Probably involved in the function of nociceptive neurons. May regulate nociceptor function and/or development, including the sensation or modulation of pain. This Rattus norvegicus (Rat) protein is Mas-related G-protein coupled receptor member B4 (Mrgprb4).